The primary structure comprises 161 residues: Cell division protein SepF (161 aa).

It belongs to the SepF family. As to quaternary structure, homodimer. Interacts with FtsZ.

The protein resides in the cytoplasm. In terms of biological role, cell division protein that is part of the divisome complex and is recruited early to the Z-ring. Probably stimulates Z-ring formation, perhaps through the cross-linking of FtsZ protofilaments. Its function overlaps with FtsA. This chain is Cell division protein SepF, found in Finegoldia magna (strain ATCC 29328 / DSM 20472 / WAL 2508) (Peptostreptococcus magnus).